Consider the following 419-residue polypeptide: Coiled-coil domain-containing protein 85C (419 aa).

Alanine 2 carries the N-acetylalanine modification. Coiled-coil stretches lie at residues 22 to 88 (ELLR…RELC) and 118 to 159 (HEVA…AALA). 2 disordered regions span residues 162–268 (GAAS…DPSS) and 307–348 (HSES…AGQK). The span at 164-175 (ASGGGGGGGGAG) shows a compositional bias: gly residues. Positions 176 to 189 (SRSSIDSQASLSGP) are enriched in low complexity. Serine 178 carries the post-translational modification Phosphoserine. A compositionally biased stretch (pro residues) spans 224-233 (PPPLLPPGPH). Serine 246 is subject to Phosphoserine. Residues 307–325 (HSESQLASLPPSYQDSLQN) show a composition bias toward polar residues. Residues 329-338 (CPAPELPSPP) are compositionally biased toward pro residues.

This sequence belongs to the CCDC85 family. May interact with ARVCF, CTNND1, CTNND2 and PKP4.

It is found in the cell junction. It localises to the tight junction. The protein localises to the adherens junction. Functionally, may play a role in cell-cell adhesion and epithelium development through its interaction with proteins of the beta-catenin family. May play an important role in cortical development, especially in the maintenance of radial glia. This chain is Coiled-coil domain-containing protein 85C (CCDC85C), found in Homo sapiens (Human).